We begin with the raw amino-acid sequence, 351 residues long: Nicotinate-nucleotide--dimethylbenzimidazole phosphoribosyltransferase (351 aa).

Catalysis depends on Glu317, which acts as the Proton acceptor.

It belongs to the CobT family.

It carries out the reaction 5,6-dimethylbenzimidazole + nicotinate beta-D-ribonucleotide = alpha-ribazole 5'-phosphate + nicotinate + H(+). It participates in nucleoside biosynthesis; alpha-ribazole biosynthesis; alpha-ribazole from 5,6-dimethylbenzimidazole: step 1/2. Functionally, catalyzes the synthesis of alpha-ribazole-5'-phosphate from nicotinate mononucleotide (NAMN) and 5,6-dimethylbenzimidazole (DMB). The sequence is that of Nicotinate-nucleotide--dimethylbenzimidazole phosphoribosyltransferase from Bradyrhizobium sp. (strain BTAi1 / ATCC BAA-1182).